We begin with the raw amino-acid sequence, 573 residues long: Potassium-transporting ATPase potassium-binding subunit (573 aa).

10 helical membrane passes run 6–26 (ILFA…GSYI), 66–86 (FFSL…ILLL), 135–155 (ALAV…IALI), 177–197 (IFWI…FQGV), 257–277 (IQMV…GKWV), 283–303 (GWLI…VMTI), 382–402 (IFGG…LAVF), 428–448 (MFAL…AAVI), 493–513 (ITIA…VIML), and 537–557 (FIFA…TIFP).

Belongs to the KdpA family. In terms of assembly, the system is composed of three essential subunits: KdpA, KdpB and KdpC.

It localises to the cell inner membrane. Part of the high-affinity ATP-driven potassium transport (or Kdp) system, which catalyzes the hydrolysis of ATP coupled with the electrogenic transport of potassium into the cytoplasm. This subunit binds the periplasmic potassium ions and delivers the ions to the membrane domain of KdpB through an intramembrane tunnel. This Francisella tularensis subsp. novicida (strain U112) protein is Potassium-transporting ATPase potassium-binding subunit.